Here is a 1463-residue protein sequence, read N- to C-terminus: Nucleoporin NUP152 (1463 aa).

Disordered regions lie at residues M1–G199, G339–A568, and T609–T1064. Polar residues-rich tracts occupy residues S32 to A42, G81 to A92, T144 to P155, T175 to P191, P367 to P378, and P416 to I472. Residues K481–E498 are compositionally biased toward acidic residues. Composition is skewed to low complexity over residues G511–S523 and A616–T630. Polar residues-rich tracts occupy residues I651–P664, P673–A689, and T720–Q746. Residues F729–G732 form an FXFG 1 repeat. Low complexity predominate over residues K753–S768. A compositionally biased stretch (polar residues) spans P777–T789. The segment covering T803–T813 has biased composition (low complexity). Polar residues predominate over residues N814–D828. One copy of the FXFG 2 repeat lies at F835 to G838. Polar residues predominate over residues T840–N863. Over residues A870–T881 the composition is skewed to low complexity. Polar residues-rich tracts occupy residues G900–Q923, G940–E961, S968–E987, S998–Q1029, and P1037–N1055. The FXFG 3 repeat unit spans residues F910–G913. 4 FXFG repeats span residues F1074–G1077, F1127–G1130, F1141–G1144, and F1152–G1155. Disordered regions lie at residues G1155–S1174 and Q1179–P1217. The span at A1156–A1170 shows a compositional bias: low complexity. The FXFG 8 repeat unit spans residues F1173–G1176. Polar residues predominate over residues Q1179–A1199. The FXFG 9 repeat unit spans residues F1236–G1239. The segment covering G1240 to A1271 has biased composition (low complexity). Disordered regions lie at residues G1240 to V1335 and A1416 to K1463. The 139-residue stretch at G1289–K1427 folds into the RanBD1 domain. Residues L1418–K1463 are compositionally biased toward basic and acidic residues.

In terms of assembly, the nuclear pore complex (NPC) constitutes the exclusive means of nucleocytoplasmic transport. NPCs allow the passive diffusion of ions and small molecules and the active, nuclear transport receptor-mediated bidirectional transport of macromolecules such as proteins, RNAs, ribonucleoparticles (RNPs), and ribosomal subunits across the nuclear envelope. The 55-60 MDa NPC is composed of at least 28 different subunits: AMO1, ELYS, GLE1, GLE2, MLP1, NDC1, NIC96, NSP1, NUP133, NUP145, NUP152, NUP159, NUP170, NUP188, NUP192, NUP37, NUP49, NUP53, NUP56, NUP57, NUP82, NUP84, NUP85, POM152, POM33, POM34, SEC13 and SEH1. Due to its 8-fold rotational symmetry, all subunits are present with 8 copies or multiples thereof.

It localises to the nucleus. The protein resides in the nuclear pore complex. The protein localises to the nucleus membrane. Its function is as follows. Functions as a component of the nuclear pore complex (NPC). NPC components, collectively referred to as nucleoporins (NUPs), can play the role of both NPC structural components and of docking or interaction partners for transiently associated nuclear transport factors. Active directional transport is assured by both, a Phe-Gly (FG) repeat affinity gradient for these transport factors across the NPC and a transport cofactor concentration gradient across the nuclear envelope (GSP1 and GSP2 GTPases associated predominantly with GTP in the nucleus, with GDP in the cytoplasm). The protein is Nucleoporin NUP152 (NUP152) of Chaetomium thermophilum (strain DSM 1495 / CBS 144.50 / IMI 039719) (Thermochaetoides thermophila).